Reading from the N-terminus, the 239-residue chain is Putative HTH-type transcriptional regulator YkgA (239 aa).

Residues 19–117 (QQLLEWIECN…GCSPREYRHR (99 aa)) enclose the HTH araC/xylS-type domain. 2 DNA-binding regions (H-T-H motif) span residues 36–57 (EDIAQKSGYSRRNIQLLFRNFM) and 84–107 (MLDIALSLHFDSQQSFSREFKKLF).

The chain is Putative HTH-type transcriptional regulator YkgA (ykgA) from Escherichia coli (strain K12).